We begin with the raw amino-acid sequence, 313 residues long: MNVGIKGFGAYAPEKVVDNAYFESFLETSDEWISKMTGIKERRWASENQDTSDLAFEASKKAIKDAGITPADIDMIIVATATGDMPFPSVANILQEKLDTRKVPTMDQLAACSGFMYSMITAKQYVQSGDYKNILVVGADKLSKITDLTDRSTAVLFGDGAGAVVIGEVSEGRGIISYEMGSDGNGGKYLYLNKDTGKLVMNGREVFKFAVRIMGEASTRVVDKAGLQSDDIDMFIPHQANIRIMESARERLGIEREKMSVSVNRFGNTSAASIPLSISQELENGRIKDDDTLVLVGFGGGLTWGAMVIKWGK.

Active-site residues include Cys112 and His238. The segment at 239–243 (QANIR) is ACP-binding. The active site involves Asn268.

The protein belongs to the thiolase-like superfamily. FabH family. Homodimer.

It is found in the cytoplasm. The catalysed reaction is malonyl-[ACP] + acetyl-CoA + H(+) = 3-oxobutanoyl-[ACP] + CO2 + CoA. Its pathway is lipid metabolism; fatty acid biosynthesis. Functionally, catalyzes the condensation reaction of fatty acid synthesis by the addition to an acyl acceptor of two carbons from malonyl-ACP. Catalyzes the first condensation reaction which initiates fatty acid synthesis and may therefore play a role in governing the total rate of fatty acid production. Possesses both acetoacetyl-ACP synthase and acetyl transacylase activities. Its substrate specificity determines the biosynthesis of branched-chain and/or straight-chain of fatty acids. This is Beta-ketoacyl-[acyl-carrier-protein] synthase III from Staphylococcus haemolyticus (strain JCSC1435).